A 68-amino-acid polypeptide reads, in one-letter code: DNA-directed RNA polymerase subunit Rpo10 (68 aa).

Positions 7, 10, 44, and 45 each coordinate Zn(2+).

The protein belongs to the archaeal Rpo10/eukaryotic RPB10 RNA polymerase subunit family. Part of the RNA polymerase complex. It depends on Zn(2+) as a cofactor.

The protein localises to the cytoplasm. The catalysed reaction is RNA(n) + a ribonucleoside 5'-triphosphate = RNA(n+1) + diphosphate. Functionally, DNA-dependent RNA polymerase (RNAP) catalyzes the transcription of DNA into RNA using the four ribonucleoside triphosphates as substrates. This is DNA-directed RNA polymerase subunit Rpo10 from Methanococcus vannielii (strain ATCC 35089 / DSM 1224 / JCM 13029 / OCM 148 / SB).